Consider the following 298-residue polypeptide: Troponin T, cardiac muscle (298 aa).

The segment covering 1–70 has biased composition (acidic residues); that stretch reads MSDIEEVVEE…EAKEAEDGPM (70 aa). Disordered stretches follow at residues 1–95 and 120–219; these read MSDI…GERV and FENR…EKKK. Serine 2 carries the post-translational modification N-acetylserine. Serine 2 bears the Phosphoserine; by CK2 mark. Basic and acidic residues-rich tracts occupy residues 120-183 and 203-219; these read FENR…DEAR and QTERKSGKRQTEREKKK. Threonine 204 is modified (phosphothreonine; by PKC/PRKCA). Phosphoserine; by PKC/PRKCA is present on serine 208. Threonine 213 carries the post-translational modification Phosphothreonine; by PKC/PRKCA and RAF1. At threonine 294 the chain carries Phosphothreonine; by PKC/PRKCA.

This sequence belongs to the troponin T family. Post-translationally, phosphorylation at Thr-213 by PRKCA induces significant reduction in myofilament calcium sensitivity and actomyosin ATPase activity. As to expression, heart. The fetal heart shows a greater expression in the atrium than in the ventricle, while the adult heart shows a greater expression in the ventricle than in the atrium. Isoform 6 predominates in normal adult heart. Isoforms 1, 7 and 8 are expressed in fetal heart. Isoform 7 is also expressed in failing adult heart.

Functionally, troponin T is the tropomyosin-binding subunit of troponin, the thin filament regulatory complex which confers calcium-sensitivity to striated muscle actomyosin ATPase activity. This Homo sapiens (Human) protein is Troponin T, cardiac muscle (TNNT2).